We begin with the raw amino-acid sequence, 405 residues long: Tryptophan synthase beta chain (405 aa).

Lys-98 is subject to N6-(pyridoxal phosphate)lysine.

It belongs to the TrpB family. In terms of assembly, tetramer of two alpha and two beta chains. It depends on pyridoxal 5'-phosphate as a cofactor.

It carries out the reaction (1S,2R)-1-C-(indol-3-yl)glycerol 3-phosphate + L-serine = D-glyceraldehyde 3-phosphate + L-tryptophan + H2O. It functions in the pathway amino-acid biosynthesis; L-tryptophan biosynthesis; L-tryptophan from chorismate: step 5/5. The beta subunit is responsible for the synthesis of L-tryptophan from indole and L-serine. This chain is Tryptophan synthase beta chain, found in Stenotrophomonas maltophilia (strain R551-3).